Reading from the N-terminus, the 110-residue chain is MNNLKLDIVEQDDKAIVRVQGDIDAYNSSELKEQLRNFISTTSKKKIVLDLSSVSYMDSAGLGTLVVILKDAKINGKEFILSSLKESISRILKLTHLDKIFKITDTVEEA.

The STAS domain maps to leucine 4–alanine 110. Phosphoserine is present on serine 59.

The protein belongs to the anti-sigma-factor antagonist family. In terms of processing, phosphorylated on a serine residue.

Its function is as follows. In the phosphorylated form it could act as an anti-anti-sigma factor that counteracts an anti-sigma factor and thus releases a sigma factor from inhibition. The sequence is that of Putative anti-sigma factor antagonist TM_1442 from Thermotoga maritima (strain ATCC 43589 / DSM 3109 / JCM 10099 / NBRC 100826 / MSB8).